The following is a 562-amino-acid chain: MKALLRALIGQGIEALRANGTLPGDTLPPDFVVERPKTREHGDFATNAAMLLAKAARSNPRALAQALLTALPDSNDVTKVEIAGPGFINFHLAPTAYQREVAHVIKQGHDYGRGLAGNGRSVGVEYVSANPTGPLHVGHGRAAAIGDSLARVLDANGWNVKREFYYNDAGVQIENLALSVQARAQGLTPDSAGWPENGYRGDYIADVANAYLTGDTVDMEGHLVTGTKDPADLESIRRFAVAYLRNEQNHDLAAFRVDFDIYFLESSLYKDGKVEEAVQKLIASGHTYEEGGALWLKSTDFGDDKDRVMRKSDGTYTYFVPDVAYHLTKWQRGYERAITELGADHHGSLTRVRAGLQAMELGIPQGWPEYVLHQMVTVMRDGEEVKLGKRAGGYVTLRDLIEETSADAVRWFLIARKPDSQLTFDIDLARAQSNDNPVFYVQYAHARVCSVLRQAQEKGYKYDQVHGLAELARLDDEHSLAVMLELSRYPEVVEIAGQTLEPYQIAQYLRELAHAFHTWYHNSKVLVDDAAERDAKLTLAVATQQVLANGLELLGVSAPEKM.

Positions 129–139 (ANPTGPLHVGH) match the 'HIGH' region motif.

It belongs to the class-I aminoacyl-tRNA synthetase family. In terms of assembly, monomer.

It localises to the cytoplasm. The enzyme catalyses tRNA(Arg) + L-arginine + ATP = L-arginyl-tRNA(Arg) + AMP + diphosphate. In Xanthomonas oryzae pv. oryzae (strain KACC10331 / KXO85), this protein is Arginine--tRNA ligase.